Consider the following 617-residue polypeptide: DNA mismatch repair protein MutL (617 aa).

It belongs to the DNA mismatch repair MutL/HexB family.

Functionally, this protein is involved in the repair of mismatches in DNA. It is required for dam-dependent methyl-directed DNA mismatch repair. May act as a 'molecular matchmaker', a protein that promotes the formation of a stable complex between two or more DNA-binding proteins in an ATP-dependent manner without itself being part of a final effector complex. This is DNA mismatch repair protein MutL from Bartonella tribocorum (strain CIP 105476 / IBS 506).